We begin with the raw amino-acid sequence, 309 residues long: Elongation factor Ts (309 aa).

The involved in Mg(2+) ion dislocation from EF-Tu stretch occupies residues Thr98 to Val101.

This sequence belongs to the EF-Ts family.

The protein resides in the cytoplasm. Functionally, associates with the EF-Tu.GDP complex and induces the exchange of GDP to GTP. It remains bound to the aminoacyl-tRNA.EF-Tu.GTP complex up to the GTP hydrolysis stage on the ribosome. This is Elongation factor Ts from Orientia tsutsugamushi (strain Boryong) (Rickettsia tsutsugamushi).